We begin with the raw amino-acid sequence, 423 residues long: MDKIIVEGGQTRLQGQVVIEGAKNAVLPLLAATILPSQGKTLLTNVPILSDVFTMNNVVRGLDIQVDFNCDKKEILVDASGDILDVAPYEFVSQMRASIVVLGPILARNGHAKVSMPGGCTIGSRPIDLHLKGLEAMGATITQNGGDITAQAEKLKGANIYMDFPSVGATQNLMMAATLASGTTTIENAAREPEIVDLAQLLNKMGAKVKGAGTETLTIIGVDALHGTEHDVVQDRIEAGTFMVAAAMTSGNVLVKDAIWEHNRPLISKLMEMGVEVSEEEDGIRVKADTKKLKPVTVKTLPHPGFPTDMQAQFTALMAVVNGESTMIETVFENRFQHLEEMRRMGLQTEILRDTAMIHGGRALQGAPVMSTDLRASAALILAGMVAQGQTVVGQLTHLDRGYYQFHEKLAALGANIKRVSEA.

Residue 23 to 24 (KN) participates in phosphoenolpyruvate binding. R96 is a UDP-N-acetyl-alpha-D-glucosamine binding site. C120 acts as the Proton donor in catalysis. C120 carries the 2-(S-cysteinyl)pyruvic acid O-phosphothioketal modification. UDP-N-acetyl-alpha-D-glucosamine is bound by residues 125–129 (RPIDL), D309, and V331.

The protein belongs to the EPSP synthase family. MurA subfamily.

The protein resides in the cytoplasm. It carries out the reaction phosphoenolpyruvate + UDP-N-acetyl-alpha-D-glucosamine = UDP-N-acetyl-3-O-(1-carboxyvinyl)-alpha-D-glucosamine + phosphate. The protein operates within cell wall biogenesis; peptidoglycan biosynthesis. In terms of biological role, cell wall formation. Adds enolpyruvyl to UDP-N-acetylglucosamine. This chain is UDP-N-acetylglucosamine 1-carboxyvinyltransferase 2, found in Streptococcus agalactiae serotype III (strain NEM316).